The primary structure comprises 1085 residues: DNA polymerase (1085 aa).

Residues 1059–1085 form a disordered region; the sequence is YDQKRPNPRPQEPLLENPFWDDSSQTA.

It belongs to the DNA polymerase type-B family. As to quaternary structure, heterodimer with the terminal protein; this heterodimer binds to bp 9 to 18 of the genome. Forms a complex with viral pTP, DBP and hosts NFIA and POU2F1/OCT1 for initiation of replication.

The protein resides in the host nucleus. It catalyses the reaction DNA(n) + a 2'-deoxyribonucleoside 5'-triphosphate = DNA(n+1) + diphosphate. Functionally, eukaryotic-type DNA polymerase involved in viral genomic replication. DNA synthesis is protein primed, and acts in a strand displacement replication. Eukaryotic-type DNA polymerase involved in viral genomic replication. DNA synthesis is protein primed, and acts in a strand displacement replication. Assembles in complex with viral pTP, DBP, host NFIA and host POU2F1/OCT1 on viral origin of replication. The polymerase covalently transfers dCMP onto pTP, thereby initiating complementary strand synthesis. The sequence is that of DNA polymerase from Pantherophis guttatus (Corn snake).